The chain runs to 170 residues: Protein SprT (170 aa).

Residues 23 to 164 (QLARQHFSVE…CRQCGDKLKF (142 aa)) enclose the SprT-like domain. Histidine 78 is a Zn(2+) binding site. The active site involves glutamate 79. Histidine 82 is a Zn(2+) binding site.

Belongs to the SprT family. Zn(2+) is required as a cofactor.

It is found in the cytoplasm. This Serratia proteamaculans (strain 568) protein is Protein SprT.